The chain runs to 344 residues: MRILEFDEKRQAAKLHIESEDDLWILHLILEKGDKVVAKTTRDIGLGKESRRIPMTIVLKVDYTEFQEFTNRLRIHGIIEDAPERFGIRGAHHTINLDIGDEIIIIKQQWSKYALDKLKKQADKRSKIIIALVDFDEYLIAIPFEQGIKILSEKSLRSLNEEEGIIEQNALEVATELAEYVKQYNPDAILLAGPGFFKEEVAKKVNNILKNKKVYIDSVSSATRAGLHEILKRDIIDKIMSDYEIAIGAKKMEKAMELLAKQPELVTYGLEQVKNAVEMGAVETVLLIEDLLSSNNQERLAIERILEDIENKRGEIILVPKESPIYFELKNLTGILAILRFRIN.

It belongs to the eukaryotic release factor 1 family. Pelota subfamily. In terms of assembly, monomer. The cofactor is a divalent metal cation.

The protein localises to the cytoplasm. Functionally, may function in recognizing stalled ribosomes, interact with stem-loop structures in stalled mRNA molecules, and effect endonucleolytic cleavage of the mRNA. May play a role in the release non-functional ribosomes and degradation of damaged mRNAs. Has endoribonuclease activity. The chain is Protein pelota homolog from Saccharolobus islandicus (strain M.14.25 / Kamchatka #1) (Sulfolobus islandicus).